We begin with the raw amino-acid sequence, 283 residues long: NADPH-dependent 7-cyano-7-deazaguanine reductase (283 aa).

89–91 (IES) serves as a coordination point for substrate. NADPH is bound at residue 91–92 (SK). The Thioimide intermediate role is filled by Cys-190. Catalysis depends on Asp-197, which acts as the Proton donor. 229-230 (HE) is a substrate binding site. 258-259 (RG) is an NADPH binding site.

The protein belongs to the GTP cyclohydrolase I family. QueF type 2 subfamily. In terms of assembly, homodimer.

Its subcellular location is the cytoplasm. The catalysed reaction is 7-aminomethyl-7-carbaguanine + 2 NADP(+) = 7-cyano-7-deazaguanine + 2 NADPH + 3 H(+). The protein operates within tRNA modification; tRNA-queuosine biosynthesis. Catalyzes the NADPH-dependent reduction of 7-cyano-7-deazaguanine (preQ0) to 7-aminomethyl-7-deazaguanine (preQ1). This Aromatoleum aromaticum (strain DSM 19018 / LMG 30748 / EbN1) (Azoarcus sp. (strain EbN1)) protein is NADPH-dependent 7-cyano-7-deazaguanine reductase.